The chain runs to 583 residues: Mitogen-activated protein kinase 4 (583 aa).

Residues 20-312 form the Protein kinase domain; sequence FIDFQPLGFG…AEMGLQHPYM (293 aa). ATP contacts are provided by residues 26 to 34 and Lys-49; that span reads LGFGVNGLV. The active-site Proton acceptor is the Asp-149. Ser-186 is modified (phosphoserine; by PAK1, PAK2 and PAK3). The SEG motif motif lies at 186-188; the sequence is SEG. An FRIEDE motif motif is present at residues 328–333; sequence FRIEDE. Basic and acidic residues-rich tracts occupy residues 366-379 and 391-410; these read DRCQ…RDPR and VDPR…QSHS. The tract at residues 366–410 is disordered; the sequence is DRCQDASEVQRDPRAGSTPLAEDVQVDPRKDSQSSSERFLEQSHS. At Ser-430 the chain carries Phosphoserine. The tract at residues 495 to 531 is disordered; that stretch reads STQSGSERASPPPDAPEPRLSASPPGHPTPIDGGASP.

It belongs to the protein kinase superfamily. CMGC Ser/Thr protein kinase family. MAP kinase subfamily. As to quaternary structure, homodimer. Heterodimer with ERK3/MAPK6. Interacts with (via FRIEDE motif) MAPKAPK5. Mg(2+) serves as cofactor. Post-translationally, phosphorylated at Ser-186 by PAK1, PAK2 and PAK3 resulting in catalytic activation. Phosphorylated by MAPKAPK5 at other sites.

Its subcellular location is the cytoplasm. The protein localises to the nucleus. It catalyses the reaction L-seryl-[protein] + ATP = O-phospho-L-seryl-[protein] + ADP + H(+). The catalysed reaction is L-threonyl-[protein] + ATP = O-phospho-L-threonyl-[protein] + ADP + H(+). Its activity is regulated as follows. Activated by phosphorylation at Ser-186. Atypical MAPK protein. Phosphorylates microtubule-associated protein 2 (MAP2) and MAPKAPK5. The precise role of the complex formed with MAPKAPK5 is still unclear, but the complex follows a complex set of phosphorylation events: upon interaction with atypical MAPKAPK5, ERK4/MAPK4 is phosphorylated at Ser-186 and then mediates phosphorylation and activation of MAPKAPK5, which in turn phosphorylates ERK4/MAPK4. May promote entry in the cell cycle. The protein is Mitogen-activated protein kinase 4 (Mapk4) of Mus musculus (Mouse).